A 445-amino-acid chain; its full sequence is Chromosome partition protein MukF (445 aa).

The interval 212–240 (LDETSGNLRELQDTLNAAGDKLQEQLLRI) is leucine-zipper.

It belongs to the MukF family. In terms of assembly, interacts, and probably forms a ternary complex, with MukE and MukB via its C-terminal region. The complex formation is stimulated by calcium or magnesium. It is required for an interaction between MukE and MukB.

It is found in the cytoplasm. The protein resides in the nucleoid. Functionally, involved in chromosome condensation, segregation and cell cycle progression. May participate in facilitating chromosome segregation by condensation DNA from both sides of a centrally located replisome during cell division. Not required for mini-F plasmid partitioning. Probably acts via its interaction with MukB and MukE. Overexpression results in anucleate cells. It has a calcium binding activity. This Mannheimia succiniciproducens (strain KCTC 0769BP / MBEL55E) protein is Chromosome partition protein MukF.